Consider the following 308-residue polypeptide: tRNA pseudouridine synthase B (308 aa).

Residue D44 is the Nucleophile of the active site.

The protein belongs to the pseudouridine synthase TruB family. Type 1 subfamily.

The catalysed reaction is uridine(55) in tRNA = pseudouridine(55) in tRNA. In terms of biological role, responsible for synthesis of pseudouridine from uracil-55 in the psi GC loop of transfer RNAs. This is tRNA pseudouridine synthase B from Bdellovibrio bacteriovorus (strain ATCC 15356 / DSM 50701 / NCIMB 9529 / HD100).